Here is a 603-residue protein sequence, read N- to C-terminus: MFSKSEFREVVKSMGLVFGDIGTSPIYTLTVIFLLTRPTHTHIIGVLSLIIWTLIILVTVEYAWLAMSLGKKGEGGTIVLKEILVPLLKSSRNVAFVTLLAYIGTSFLMGDGVITPAISILSAVEGLRIIPQFENIGQSTIILISAAIAIALFSVQSKGIEKITWVFGPIMVLWFATIGFSGIASIFYTPEVLKAINPYYAIRFLLDNGIIGFFVLSEVILCATGGEALYADMGHLGREPILKAWRFVFLALVLNYLGQGAFLIRNPGSTNFLFEMINQQANILYIPFLLLSVVATIIASQAMISGMFSIVYQGITTRIIPMLKIDYTSGVFKSQIYISTVNWLLLVSVLFMMLIFKESSKLAAAYGLAVTGTMSITGIMMTSIFYHRKNITKALISLFITFIDVVFLLSNSYKIPHGGYWSVIIALFILSLILIYTSGQKKLYKLMKLMKSKDFLEKYKQVYATQNKIMGTALFFTRDIERIPQYISHVMFKNNIIYENNIFISIIKSDSPFGIETSFTKEPAKGLKILEIRAGYMEIVNVEKILKDQGIGEKTIFYGVEDIFTKNIIWRIFSIIKKVSPSFVQFYKLPTDELHGVMTRFEM.

12 consecutive transmembrane segments (helical) span residues 15–35, 43–63, 94–114, 135–155, 163–183, 209–229, 244–264, 283–303, 336–356, 365–385, 390–410, and 415–435; these read GLVFGDIGTSPIYTLTVIFLL, IIGVLSLIIWTLIILVTVEYA, VAFVTLLAYIGTSFLMGDGVI, NIGQSTIILISAAIAIALFSV, ITWVFGPIMVLWFATIGFSGI, GIIGFFVLSEVILCATGGEAL, AWRFVFLALVLNYLGQGAFLI, ILYIPFLLLSVVATIIASQAM, IYISTVNWLLLVSVLFMMLIF, AYGLAVTGTMSITGIMMTSIF, NITKALISLFITFIDVVFLLS, and IPHGGYWSVIIALFILSLILI.

Belongs to the HAK/KUP transporter (TC 2.A.72) family.

It is found in the cell membrane. It catalyses the reaction K(+)(in) + H(+)(in) = K(+)(out) + H(+)(out). Transport of potassium into the cell. Likely operates as a K(+):H(+) symporter. In Methanosarcina barkeri (strain Fusaro / DSM 804), this protein is Probable potassium transport system protein Kup.